Consider the following 328-residue polypeptide: Arabinose 5-phosphate isomerase KdsD (328 aa).

An SIS domain is found at 42-184 (CEKMFWCKGK…AVALLKARGF (143 aa)). Substrate is bound by residues 75–76 (GT), histidine 82, histidine 88, 114–123 (ALIPVLKRLH), 148–150 (KVA), threonine 222, and aspartate 275. Histidine 82 is a Zn(2+) binding site. Positions 210 to 268 (MHTGDEIPHVKKTASLRDALLEVTRKNLGMTVICDDNMMIEGIFTDGDLRRVFDMGVDV) constitute a CBS 1 domain. In terms of domain architecture, CBS 2 spans 277–328 (MTPGGIRVRPGILAVEALNLMQSRHITSVMVADGDHLLGVLHMHDLLRAGVV).

This sequence belongs to the SIS family. GutQ/KpsF subfamily. Homotetramer.

It catalyses the reaction D-arabinose 5-phosphate = D-ribulose 5-phosphate. Its pathway is carbohydrate biosynthesis; 3-deoxy-D-manno-octulosonate biosynthesis; 3-deoxy-D-manno-octulosonate from D-ribulose 5-phosphate: step 1/3. The protein operates within bacterial outer membrane biogenesis; lipopolysaccharide biosynthesis. Its function is as follows. Involved in the biosynthesis of 3-deoxy-D-manno-octulosonate (KDO), a unique 8-carbon sugar component of lipopolysaccharides (LPSs). Catalyzes the reversible aldol-ketol isomerization between D-ribulose 5-phosphate (Ru5P) and D-arabinose 5-phosphate (A5P). This Escherichia coli O157:H7 protein is Arabinose 5-phosphate isomerase KdsD (kdsD).